The chain runs to 296 residues: Cytoplasmic envelopment protein 1 (296 aa).

The protein belongs to the herpesviridae cytoplasmic envelopment protein 1 family. In terms of assembly, interacts with UL51; this interaction allows incorporation of UL7 within the virion.

It localises to the virion. Its subcellular location is the virion tegument. The protein localises to the host cytoplasm. It is found in the host Golgi apparatus. Functionally, plays a critical role in cytoplasmic virus egress. Participates in the final step of tegumentation and envelope acquisition within the host cytoplasm. The chain is Cytoplasmic envelopment protein 1 (UL7) from Human herpesvirus 1 (strain 17) (HHV-1).